The chain runs to 620 residues: Glutathione-regulated potassium-efflux system protein KefC (620 aa).

The next 12 membrane-spanning stretches (helical) occupy residues 4–24, 26–46, 54–74, 90–110, 114–134, 149–169, 178–198, 218–238, 270–290, 294–314, 327–347, and 359–379; these read HTLM…PIAV, LGLG…PWGL, SILH…GLEL, GALQ…FLGL, VAEL…MQAM, FAVL…IPLL, LGAF…VVLL, VFSA…EEVG, GLLL…GTLV, LRIL…LWLI, WFAV…GAAQ, and ALTL…VLLT. An RCK N-terminal domain is found at 399-518; it reads QPRVIVAGFG…AGVAMPERET (120 aa). Positions 599–620 are disordered; it reads QGTAEGKHTGDIADEPQVKPST.

It belongs to the monovalent cation:proton antiporter 2 (CPA2) transporter (TC 2.A.37) family. KefC subfamily. As to quaternary structure, homodimer. Interacts with the regulatory subunit KefF.

Its subcellular location is the cell inner membrane. In terms of biological role, pore-forming subunit of a potassium efflux system that confers protection against electrophiles. Catalyzes K(+)/H(+) antiport. The polypeptide is Glutathione-regulated potassium-efflux system protein KefC (Salmonella arizonae (strain ATCC BAA-731 / CDC346-86 / RSK2980)).